A 166-amino-acid polypeptide reads, in one-letter code: Endoribonuclease YbeY (166 aa).

His129, His133, and His139 together coordinate Zn(2+).

The protein belongs to the endoribonuclease YbeY family. Requires Zn(2+) as cofactor.

The protein resides in the cytoplasm. Its function is as follows. Single strand-specific metallo-endoribonuclease involved in late-stage 70S ribosome quality control and in maturation of the 3' terminus of the 16S rRNA. In Mesorhizobium japonicum (strain LMG 29417 / CECT 9101 / MAFF 303099) (Mesorhizobium loti (strain MAFF 303099)), this protein is Endoribonuclease YbeY.